The primary structure comprises 426 residues: Histidine--tRNA ligase (426 aa).

This sequence belongs to the class-II aminoacyl-tRNA synthetase family. In terms of assembly, homodimer.

It localises to the cytoplasm. It carries out the reaction tRNA(His) + L-histidine + ATP = L-histidyl-tRNA(His) + AMP + diphosphate + H(+). The sequence is that of Histidine--tRNA ligase from Pseudoalteromonas translucida (strain TAC 125).